The chain runs to 538 residues: Endoglucanase 16 (538 aa).

A signal peptide spans 1-26 (MRWRRVGDVVAVALLLGAAAAAAAAA). The Nucleophile role is filled by Asp-83. Residues His-431, Asp-483, and Glu-492 contribute to the active site. Residues 513–538 (RQESPSTTTTTTATTSSPEMGLSVNR) form a disordered region. The segment covering 516-530 (SPSTTTTTTATTSSP) has biased composition (low complexity).

This sequence belongs to the glycosyl hydrolase 9 (cellulase E) family.

It localises to the secreted. The enzyme catalyses Endohydrolysis of (1-&gt;4)-beta-D-glucosidic linkages in cellulose, lichenin and cereal beta-D-glucans.. The protein is Endoglucanase 16 of Oryza sativa subsp. japonica (Rice).